Reading from the N-terminus, the 266-residue chain is MEISTLQIIAIFIFSCIAGMGSVLDEFQTHRPLIACTVIGLILGDLKTGVMLGGTLELIALGWMNVGAAQSPDSALASIISAILVIVGHQSIAIGIAIALPVAAAGQVLTVFARTITVVFQHAADKAAEEARFRTIDLLHVSALGVQGLRVAIPALVVSLFVSADMVSSMLSAIPEFVTRGLQIAGGFIVVVGYAMVLRMMGVKYLMPFFFLGFLAGGYLDFSLLAFGGVGVIIALIYIQLNPQWRKAEPAASTAPSAPALDQLDD.

The PTS EIIC type-4 domain maps to 1 to 237 (MEISTLQIIA…GGVGVIIALI (237 aa)). 7 consecutive transmembrane segments (helical) span residues 3–23 (ISTL…MGSV), 33–53 (LIAC…VMLG), 79–99 (IISA…IAIA), 100–120 (LPVA…TVVF), 151–171 (VAIP…SSML), 183–203 (QIAG…MMGV), and 219–239 (YLDF…LIYI).

The protein localises to the cell inner membrane. The phosphoenolpyruvate-dependent sugar phosphotransferase system (PTS), a major carbohydrate active transport system, catalyzes the phosphorylation of incoming sugar substrates concomitant with their translocation across the cell membrane. The enzyme II SorABFM PTS system is involved in L-sorbose transport. The protein is PTS system sorbose-specific EIIC component of Klebsiella pneumoniae.